A 337-amino-acid polypeptide reads, in one-letter code: 5-formaminoimidazole-4-carboxamide-1-(beta)-D-ribofuranosyl 5'-monophosphate synthetase (337 aa).

5-amino-1-(5-phospho-beta-D-ribosyl)imidazole-4-carboxamide contacts are provided by His9 and Ser73. The ATP-grasp domain maps to 94–324 (KKIFEWEADQ…IGRRIAREIR (231 aa)). Residues 124 to 184 (PEDV…VPMY) and Glu206 each bind ATP. 5-amino-1-(5-phospho-beta-D-ribosyl)imidazole-4-carboxamide is bound at residue Asn234. Mg(2+) contacts are provided by Glu273 and Glu286.

Belongs to the phosphohexose mutase family. The cofactor is Mg(2+). Requires Mn(2+) as cofactor.

The catalysed reaction is 5-amino-1-(5-phospho-beta-D-ribosyl)imidazole-4-carboxamide + formate + ATP = 5-formamido-1-(5-phospho-D-ribosyl)imidazole-4-carboxamide + ADP + phosphate. The protein operates within purine metabolism; IMP biosynthesis via de novo pathway; 5-formamido-1-(5-phospho-D-ribosyl)imidazole-4-carboxamide from 5-amino-1-(5-phospho-D-ribosyl)imidazole-4-carboxamide (formate route): step 1/1. Its function is as follows. Catalyzes the ATP- and formate-dependent formylation of 5-aminoimidazole-4-carboxamide-1-beta-d-ribofuranosyl 5'-monophosphate (AICAR) to 5-formaminoimidazole-4-carboxamide-1-beta-d-ribofuranosyl 5'-monophosphate (FAICAR) in the absence of folates. This is 5-formaminoimidazole-4-carboxamide-1-(beta)-D-ribofuranosyl 5'-monophosphate synthetase from Saccharolobus solfataricus (strain ATCC 35092 / DSM 1617 / JCM 11322 / P2) (Sulfolobus solfataricus).